Here is a 132-residue protein sequence, read N- to C-terminus: Global transcriptional regulator Spx 2 (132 aa).

Cysteine 10 and cysteine 13 are disulfide-bonded.

This sequence belongs to the ArsC family. Spx subfamily. In terms of assembly, interacts with the C-terminal domain of the alpha subunit of the RNAP.

Its subcellular location is the cytoplasm. Global transcriptional regulator that plays a key role in stress response and exerts either positive or negative regulation of genes. Acts by interacting with the C-terminal domain of the alpha subunit of the RNA polymerase (RNAP). This interaction can enhance binding of RNAP to the promoter region of target genes and stimulate their transcription, or block interaction of RNAP with activator. The chain is Global transcriptional regulator Spx 2 from Lactococcus lactis subsp. lactis (strain IL1403) (Streptococcus lactis).